An 88-amino-acid chain; its full sequence is Large ribosomal subunit protein bL27 (88 aa).

Belongs to the bacterial ribosomal protein bL27 family.

The sequence is that of Large ribosomal subunit protein bL27 from Mycolicibacterium vanbaalenii (strain DSM 7251 / JCM 13017 / BCRC 16820 / KCTC 9966 / NRRL B-24157 / PYR-1) (Mycobacterium vanbaalenii).